The chain runs to 128 residues: Z-ring associated protein G (128 aa).

The helical transmembrane segment at 7–27 (EIWFSISIAFLIGTLCGVLVM) threads the bilayer. Residues 37-75 (QIQLKSELASAEAKIEEQKQQLERHFEQSANLLENLAED) adopt a coiled-coil conformation. The disordered stretch occupies residues 105–128 (NHANGDEDNQPRDYSDGSSGLLKS). Over residues 107–119 (ANGDEDNQPRDYS) the composition is skewed to basic and acidic residues.

The protein belongs to the ZapG family. As to quaternary structure, homotetramer. In solution, is primarily monomeric but forms small amounts of stable tetramer and hexadecamer. The crystal structure of the cytosolic region shows a coiled-coil tetramer in the asymmetric unit that is very likely to be a physiologically relevant assembly of the protein.

It is found in the cell inner membrane. Functionally, involved in cell division, cell envelope biogenesis and cell shape maintenance. In Haemophilus ducreyi (strain 35000HP / ATCC 700724), this protein is Z-ring associated protein G.